A 707-amino-acid chain; its full sequence is MLFTGTVRVRVLEARQLRPTEWSRRFRQDEAATAAIDSYVNVDWDEYHIGKTQVRPKTNEPRWNEEFTASGVHQGKAIGFSVFHSCVMPPDDFVANTRIAFDQLKIGSANDIWVDLEPHGQLHVVVEMHGTNVEDVHSHNKTRVFKERTNAFNDRQRRGAMRRKIHEVTGHKFMALFLRQPTFCAHCKEFIWGIGKQGYQCQICTVVVHKRCHEDVVWKCPGNKADAVEELGKEIQETGAGRFNINMPHRFSVHSYKRPTFCDHCGSMLYGLINQGLQCSTCKLNVHKRCQRNVANNCGINAKQMAAELAQLGLTGDKMSIRSKKKPSIMTDTSTDISGSSNSENSGYLQQISEDDSGTTSSRSASKVPGGTLSIHDFTFMKVLGKGSFGKVMLAERKGTDEVYAIKILKKDVIVQDDDVECTMCEKRILSLAAKHPFLTALHSSFQTSDRLFFVMEYVNGGDLMFQIQRARKFDESRARFYAAEVTCALQFLHRNDVIYRDLKLDNILLDAEGHCRLADFGMCKEGINKDNLTSTFCGTPDYIAPEILQEMEYGVSVDWWALGVLMYEMMAGQPPFEADNEDDLFEAILNDDVLYPVWLSKEAVNILKAFMTKNAGKRLGCVVSQGGEDAIRAHPFFREIDWDALESRQVKPPFKPKIKSKRDANNFDSDFTKEEPVLTPSDPAVVRAINQDEFRGFSFINPHFTY.

Positions 1–114 (MLFTGTVRVR…KIGSANDIWV (114 aa)) constitute a C2 domain. 2 consecutive Phorbol-ester/DAG-type zinc fingers follow at residues 170–220 (GHKF…VWKC) and 248–298 (PHRF…ANNC). The segment at 323-368 (SKKKPSIMTDTSTDISGSSNSENSGYLQQISEDDSGTTSSRSASKV) is disordered. The segment covering 330–365 (MTDTSTDISGSSNSENSGYLQQISEDDSGTTSSRSA) has biased composition (polar residues). The Protein kinase domain maps to 378–638 (FTFMKVLGKG…EDAIRAHPFF (261 aa)). ATP contacts are provided by residues 384–392 (LGKGSFGKV) and Lys407. Asp502 acts as the Proton acceptor in catalysis. The 69-residue stretch at 639 to 707 (REIDWDALES…FSFINPHFTY (69 aa)) folds into the AGC-kinase C-terminal domain.

This sequence belongs to the protein kinase superfamily. AGC Ser/Thr protein kinase family. PKC subfamily. In terms of tissue distribution, expressed selectively in neurons that receive, transmit and process environmental signals.

The protein localises to the membrane. The protein resides in the cytoplasm. It localises to the cytoskeleton. It catalyses the reaction L-seryl-[protein] + ATP = O-phospho-L-seryl-[protein] + ADP + H(+). The enzyme catalyses L-threonyl-[protein] + ATP = O-phospho-L-threonyl-[protein] + ADP + H(+). In terms of biological role, PKC is activated by diacylglycerol which in turn phosphorylates a range of cellular proteins. PKC also serves as the receptor for phorbol esters, a class of tumor promoters. Involved in neuropeptide secretion in motor axons. Likely to act via the extracellular signal-regulated kinase/mitogen-activated protein kinase (ERK/MAPK) pathway in the signaling response to various sensory neurons; temperature, odor, taste, and osmolality. Its role in regulation differs depending on the neuron in which it is acting; thermosensation in AFD neurons, osmolality in ASH neurons, olfactory perception in AWA and AWC neurons. Promotes dauer formation mediated by the insulin/IGF pathway. Required for resistance to antimitotic toxins. The sequence is that of Protein kinase C-like 1B from Caenorhabditis elegans.